Reading from the N-terminus, the 479-residue chain is 3-isopropylmalate dehydratase large subunit (479 aa).

[4Fe-4S] cluster-binding residues include cysteine 353, cysteine 414, and cysteine 417.

The protein belongs to the aconitase/IPM isomerase family. LeuC type 1 subfamily. Heterodimer of LeuC and LeuD. Requires [4Fe-4S] cluster as cofactor.

It catalyses the reaction (2R,3S)-3-isopropylmalate = (2S)-2-isopropylmalate. It participates in amino-acid biosynthesis; L-leucine biosynthesis; L-leucine from 3-methyl-2-oxobutanoate: step 2/4. In terms of biological role, catalyzes the isomerization between 2-isopropylmalate and 3-isopropylmalate, via the formation of 2-isopropylmaleate. This chain is 3-isopropylmalate dehydratase large subunit, found in Xanthomonas campestris pv. campestris (strain 8004).